We begin with the raw amino-acid sequence, 4644 residues long: Cytoplasmic dynein 1 heavy chain 1 (4644 aa).

Ser2 carries the N-acetylserine modification. Residues 2 to 1865 (SETGGGEDGS…SIQMANAKFN (1864 aa)) are stem. 4 coiled-coil regions span residues 48–69 (AALE…FLSD), 179–200 (SVEK…NIEI), 453–476 (AHRK…QLRA), and 541–564 (TEAW…RITA). Ser68 carries the phosphoserine modification. Positions 446–701 (MVWRINPAHR…NTQEIFDDWA (256 aa)) are interaction with DYNC1I2. Positions 649–800 (AKQIDRQLTA…EKVEERNTIS (152 aa)) are interaction with DYNC1LI2. Lys1123 carries the post-translational modification N6-acetyllysine. A coiled-coil region spans residues 1169-1201 (TYVQSLKRKIKQFEKQVELYRNGQRLLEKQRFQ). Ser1228 is modified (phosphoserine). Coiled coils occupy residues 1229–1250 (AIQQ…AVES) and 1355–1371 (RKLR…LKNF). 4 AAA regions span residues 1866–2097 (YGFE…VLVS), 2178–2450 (EELK…LTRL), 2554–2803 (EVET…WVRG), and 2897–3166 (VFYE…GGRT). Residues 1904–1911 (GPAGTGKT) and 2222–2229 (GPSGSGKS) contribute to the ATP site. Residues 2389-2409 (EDEAQRRRKGKEDEGEEAASP) form a disordered region. ATP contacts are provided by residues 2593–2600 (GPPGSGKT) and 2935–2942 (GVSGAGKT). Coiled-coil stretches lie at residues 3187 to 3273 (EKRS…ADKQ), 3394 to 3498 (AIAQ…KNQM), and 3735 to 3798 (EFQL…VSQQ). The segment at 3187–3498 (EKRSELEEQQ…KTSETFKNQM (312 aa)) is stalk. An N6-acetyllysine modification is found at Lys3478. 2 AAA regions span residues 3551-3780 (LSNA…EVTR) and 4003-4219 (AHMF…TVDT). Ser4160 is subject to Phosphoserine. Lys4281 is modified (N6-acetyllysine). Thr4364 is subject to Phosphothreonine.

It belongs to the dynein heavy chain family. Homodimer. The cytoplasmic dynein 1 complex consists of two catalytic heavy chains (HCs) and a number of non-catalytic subunits presented by intermediate chains (ICs), light intermediate chains (LICs) and light chains (LCs); the composition seems to vary in respect to the IC, LIC and LC composition. The heavy chain homodimer serves as a scaffold for the probable homodimeric assembly of the respective non-catalytic subunits. The ICs and LICs bind directly to the HC dimer and dynein LCs assemble on the IC dimer. Interacts with DYNC1LI1; DYNC1LI1 and DYNC1LI2 bind mutually exclusive to DYNC1H1. Interacts with DYNC1LI2; DYNC1LI1 and DYNC1LI2 bind mutually exclusive to DYNC1H1. Interacts with DYNC1I2. Interacts with BICD2. Interacts with DNALI1.

Its subcellular location is the cytoplasm. The protein resides in the cytoskeleton. Functionally, cytoplasmic dynein 1 acts as a motor for the intracellular retrograde motility of vesicles and organelles along microtubules. Dynein has ATPase activity; the force-producing power stroke is thought to occur on release of ADP. Plays a role in mitotic spindle assembly and metaphase plate congression. This chain is Cytoplasmic dynein 1 heavy chain 1 (Dync1h1), found in Rattus norvegicus (Rat).